The sequence spans 363 residues: Chorismate synthase (363 aa).

Residues arginine 48 and arginine 54 each contribute to the NADP(+) site. FMN is bound by residues arginine 125–serine 127, asparagine 237–alanine 238, glycine 277, lysine 292–serine 296, and arginine 318.

It belongs to the chorismate synthase family. As to quaternary structure, homotetramer. Requires FMNH2 as cofactor.

The catalysed reaction is 5-O-(1-carboxyvinyl)-3-phosphoshikimate = chorismate + phosphate. It participates in metabolic intermediate biosynthesis; chorismate biosynthesis; chorismate from D-erythrose 4-phosphate and phosphoenolpyruvate: step 7/7. Functionally, catalyzes the anti-1,4-elimination of the C-3 phosphate and the C-6 proR hydrogen from 5-enolpyruvylshikimate-3-phosphate (EPSP) to yield chorismate, which is the branch point compound that serves as the starting substrate for the three terminal pathways of aromatic amino acid biosynthesis. This reaction introduces a second double bond into the aromatic ring system. This chain is Chorismate synthase, found in Pseudomonas putida (strain GB-1).